Reading from the N-terminus, the 447-residue chain is N-succinylarginine dihydrolase (447 aa).

Substrate-binding positions include 19–28 (AGLSFGNVAS), Asn110, and 137–138 (HR). Glu174 is an active-site residue. Arg214 serves as a coordination point for substrate. His250 is a catalytic residue. Substrate is bound by residues Asp252 and Asn364. The Nucleophile role is filled by Cys370.

It belongs to the succinylarginine dihydrolase family. In terms of assembly, homodimer.

It catalyses the reaction N(2)-succinyl-L-arginine + 2 H2O + 2 H(+) = N(2)-succinyl-L-ornithine + 2 NH4(+) + CO2. Its pathway is amino-acid degradation; L-arginine degradation via AST pathway; L-glutamate and succinate from L-arginine: step 2/5. Its function is as follows. Catalyzes the hydrolysis of N(2)-succinylarginine into N(2)-succinylornithine, ammonia and CO(2). The chain is N-succinylarginine dihydrolase from Idiomarina loihiensis (strain ATCC BAA-735 / DSM 15497 / L2-TR).